We begin with the raw amino-acid sequence, 201 residues long: Glutathione peroxidase 1 (201 aa).

A Phosphoserine modification is found at S32. Residue U47 is part of the active site. Residue U47 is a non-standard amino acid, selenocysteine. An N6-acetyllysine; alternate mark is found at K86, K112, and K146. 3 positions are modified to N6-succinyllysine; alternate: K86, K112, and K146. Phosphoserine is present on residues S195 and S199.

Belongs to the glutathione peroxidase family. As to quaternary structure, homotetramer. Interacts with MIEN1. Post-translationally, during periods of oxidative stress, Sec-47 may react with a superoxide radical, irreversibly lose hydroselenide and be converted to dehydroalanine.

The protein localises to the cytoplasm. Its subcellular location is the mitochondrion. It carries out the reaction 2 glutathione + H2O2 = glutathione disulfide + 2 H2O. It catalyses the reaction a hydroperoxy polyunsaturated fatty acid + 2 glutathione = a hydroxy polyunsaturated fatty acid + glutathione disulfide + H2O. The catalysed reaction is tert-butyl hydroperoxide + 2 glutathione = tert-butanol + glutathione disulfide + H2O. The enzyme catalyses cumene hydroperoxide + 2 glutathione = 2-phenylpropan-2-ol + glutathione disulfide + H2O. It carries out the reaction (13S)-hydroperoxy-(9Z,11E)-octadecadienoate + 2 glutathione = (13S)-hydroxy-(9Z,11E)-octadecadienoate + glutathione disulfide + H2O. It catalyses the reaction (9S)-hydroperoxy-(10E,12Z)-octadecadienoate + 2 glutathione = (9S)-hydroxy-(10E,12Z)-octadecadienoate + glutathione disulfide + H2O. The catalysed reaction is (5S)-hydroperoxy-(6E,8Z,11Z,14Z)-eicosatetraenoate + 2 glutathione = (5S)-hydroxy-(6E,8Z,11Z,14Z)-eicosatetraenoate + glutathione disulfide + H2O. The enzyme catalyses (12S)-hydroperoxy-(5Z,8Z,10E,14Z)-eicosatetraenoate + 2 glutathione = (12S)-hydroxy-(5Z,8Z,10E,14Z)-eicosatetraenoate + glutathione disulfide + H2O. It carries out the reaction (12R)-hydroperoxy-(5Z,8Z,10E,14Z)-eicosatetraenoate + 2 glutathione = (12R)-hydroxy-(5Z,8Z,10E,14Z)-eicosatetraenoate + glutathione disulfide + H2O. It catalyses the reaction (15S)-hydroperoxy-(5Z,8Z,11Z,13E)-eicosatetraenoate + 2 glutathione = (15S)-hydroxy-(5Z,8Z,11Z,13E)-eicosatetraenoate + glutathione disulfide + H2O. The catalysed reaction is (5S)-hydroperoxy-(6E,8Z,11Z,14Z,17Z)-eicosapentaenoate + 2 glutathione = (5S)-hydroxy-(6E,8Z,11Z,14Z,17Z)-eicosapentaenoate + glutathione disulfide + H2O. The enzyme catalyses (12S)-hydroperoxy-(5Z,8Z,10E,14Z,17Z)-eicosapentaenoate + 2 glutathione = (12S)-hydroxy-(5Z,8Z,10E,14Z,17Z)-eicosapentaenoate + glutathione disulfide + H2O. It carries out the reaction (15S)-hydroperoxy-(5Z,8Z,11Z,13E,17Z)-eicosapentaenoate + 2 glutathione = (15S)-hydroxy-(5Z,8Z,11Z,13E,17Z)-eicosapentaenoate + glutathione disulfide + H2O. It catalyses the reaction (15S)-hydroperoxy-(11Z,13E)-eicosadienoate + 2 glutathione = (15S)-hydroxy-(11Z,13E)-eicosadienoate + glutathione disulfide + H2O. The catalysed reaction is (17S)-hydroperoxy-(4Z,7Z,10Z,13Z,15E,19Z)-docosahexaenoate + 2 glutathione = (17S)-hydroxy-(4Z,7Z,10Z,13Z,15E,19Z)-docosahexaenoate + glutathione disulfide + H2O. Catalyzes the reduction of hydroperoxides in a glutathione-dependent manner thus regulating cellular redox homeostasis. Can reduce small soluble hydroperoxides such as H2O2, cumene hydroperoxide and tert-butyl hydroperoxide, as well as several fatty acid-derived hydroperoxides. In platelets catalyzes the reduction of 12-hydroperoxyeicosatetraenoic acid, the primary product of the arachidonate 12-lipoxygenase pathway. This chain is Glutathione peroxidase 1 (GPX1), found in Macaca fuscata fuscata (Japanese macaque).